Reading from the N-terminus, the 274-residue chain is TATA box-binding protein-associated factor RNA polymerase I subunit D (274 aa).

Positions 1–19 are enriched in polar residues; sequence MDSLNYTTACDSAVETENQ. Disordered regions lie at residues 1 to 45 and 84 to 111; these read MDSL…RQRN and NKKR…RTTR. Phosphoserine is present on Ser20. Basic residues predominate over residues 84 to 110; that stretch reads NKKRKRKKKKYKPTGRSVGRPKGRRTT. A phosphoserine mark is found at Ser132 and Ser229.

Component of the transcription factor SL1/TIF-IB complex, composed of TBP and at least TAF1A, TAF1B, TAF1C and TAF1D. Interacts with UBTF.

Its subcellular location is the nucleus. Its function is as follows. Component of the transcription factor SL1/TIF-IB complex, which is involved in the assembly of the PIC (preinitiation complex) during RNA polymerase I-dependent transcription. The rate of PIC formation probably is primarily dependent on the rate of association of SL1/TIF-IB with the rDNA promoter. SL1/TIF-IB is involved in stabilization of nucleolar transcription factor 1/UBTF on rDNA. Formation of SL1/TIF-IB excludes the association of TBP with TFIID subunits. This Bos taurus (Bovine) protein is TATA box-binding protein-associated factor RNA polymerase I subunit D (TAF1D).